The sequence spans 246 residues: UDP-2,3-diacylglucosamine hydrolase (246 aa).

Positions 8, 10, 41, 79, and 114 each coordinate Mn(2+). 79–80 (NR) is a binding site for substrate. The substrate site is built by D122, S160, K164, K167, and H195. The Mn(2+) site is built by H195 and H197.

This sequence belongs to the LpxH family. Mn(2+) serves as cofactor.

It localises to the cell inner membrane. It carries out the reaction UDP-2-N,3-O-bis[(3R)-3-hydroxytetradecanoyl]-alpha-D-glucosamine + H2O = 2-N,3-O-bis[(3R)-3-hydroxytetradecanoyl]-alpha-D-glucosaminyl 1-phosphate + UMP + 2 H(+). It participates in glycolipid biosynthesis; lipid IV(A) biosynthesis; lipid IV(A) from (3R)-3-hydroxytetradecanoyl-[acyl-carrier-protein] and UDP-N-acetyl-alpha-D-glucosamine: step 4/6. In terms of biological role, hydrolyzes the pyrophosphate bond of UDP-2,3-diacylglucosamine to yield 2,3-diacylglucosamine 1-phosphate (lipid X) and UMP by catalyzing the attack of water at the alpha-P atom. Involved in the biosynthesis of lipid A, a phosphorylated glycolipid that anchors the lipopolysaccharide to the outer membrane of the cell. The chain is UDP-2,3-diacylglucosamine hydrolase from Tolumonas auensis (strain DSM 9187 / NBRC 110442 / TA 4).